We begin with the raw amino-acid sequence, 529 residues long: Peptide chain release factor 3 (529 aa).

The tr-type G domain occupies 11–280; sequence AKRRTFAIIS…GLVKWAPAPM (270 aa). GTP is bound by residues 20–27, 88–92, and 142–145; these read SHPDAGKT, DTPGH, and NKLD.

This sequence belongs to the TRAFAC class translation factor GTPase superfamily. Classic translation factor GTPase family. PrfC subfamily.

The protein localises to the cytoplasm. Functionally, increases the formation of ribosomal termination complexes and stimulates activities of RF-1 and RF-2. It binds guanine nucleotides and has strong preference for UGA stop codons. It may interact directly with the ribosome. The stimulation of RF-1 and RF-2 is significantly reduced by GTP and GDP, but not by GMP. This is Peptide chain release factor 3 from Photorhabdus laumondii subsp. laumondii (strain DSM 15139 / CIP 105565 / TT01) (Photorhabdus luminescens subsp. laumondii).